Here is a 1102-residue protein sequence, read N- to C-terminus: Avirulence protein AvrXa10 (1102 aa).

2 disordered regions span residues Met1–Ser68 and Ala127–Gln151. Basic residues predominate over residues Pro130–Ala140. Residues Ala141 to Gln151 show a composition bias toward low complexity. Core repeat repeat units lie at residues Leu288–Gly321, Leu322–Gly355, Leu356–Gly389, Leu390–Gly423, Leu424–Gly457, Leu458–Gly491, Leu492–Gly525, Leu526–Gly559, Leu560–Gly593, Leu594–Gly627, Leu628–Gly661, Leu662–Gly695, Leu696–Gly729, Leu730–Gly763, and Leu764–Gly797. One copy of the Core repeat 15.5 repeat lies at Leu798–Asn809. Positions Lys951–Lys954 match the Nuclear localization sequence A (NLSA) motif. Basic and acidic residues predominate over residues Asp978–Gln990. Residues Asp978–Gln1021 form a disordered region. The Nuclear localization sequence B (NLSB) signature appears at Lys997–Arg1000. The Nuclear localization sequence C (NLSC) signature appears at Lys1034–Arg1037. Residues Trp1063–Pro1093 form an activation domain region.

This sequence belongs to the transcription activator-like effector (TALE) family.

The protein resides in the secreted. The protein localises to the host nucleus. Its function is as follows. Avirulence protein. Induces the hypersensitive response (HR)in rice plants carrying the resistance gene Xa10. Activity depends on the presence of the core repeat domains; replacement with repeat domains from other proteins (AvrBs3 of X.euvesicatoria (AC P14727) or AvrXa7 of this organism) does not elicit the HR. Probably acts as a transcription factor in its host plant (rice) to induce plant resistance or disease. The chain is Avirulence protein AvrXa10 from Xanthomonas oryzae pv. oryzae.